Consider the following 430-residue polypeptide: CinA-like protein (430 aa).

This sequence belongs to the CinA family.

The sequence is that of CinA-like protein from Prochlorococcus marinus (strain NATL2A).